The chain runs to 582 residues: Envelope glycoprotein (582 aa).

A signal peptide spans 1–35 (MDCLTDLRSTEGKVDQAGKTLILLVVWWGFGTTAE). Residues 36–519 (GHPLQQLWEL…DNPLWNGLNG (484 aa)) are Extracellular-facing. Residue Asn-241 is glycosylated (N-linked (GlcNAc...) asparagine; by host). The short motif at 251–254 (CWLC) is the CXXC element. Intrachain disulfides connect Cys-251–Cys-254, Cys-251–Cys-481, and Cys-473–Cys-480. N-linked (GlcNAc...) asparagine; by host glycans are attached at residues Asn-301 and Asn-314. The interval 396 to 416 (FIPLLVGLGITGATLAGGTGL) is fusion peptide. Coiled coils occupy residues 417 to 467 (GVSV…LLTA) and 477 to 513 (QEKC…DNPL). Positions 456-472 (LQNRRGLDLLTAEQGGI) are immunosuppression. A CX6CC motif is present at residues 473 to 481 (CLALQEKCC). Residue Asn-485 is glycosylated (N-linked (GlcNAc...) asparagine; by host). Residues 520 to 540 (FLPYLLPSLGPLFGLILFLTL) traverse the membrane as a helical segment. The Cytoplasmic portion of the chain corresponds to 541–582 (GPCIRKTLTRIIHDKIQGSKNPRISPAVQATPNRDGYPRSMV). Cys-543 is lipidated: S-palmitoyl cysteine; by host. Polar residues predominate over residues 562 to 572 (PRISPAVQATP). The segment at 562–582 (PRISPAVQATPNRDGYPRSMV) is disordered.

In terms of assembly, the mature envelope protein (Env) consists of a trimer of SU-TM heterodimers attached by a labile interchain disulfide bond. Post-translationally, specific enzymatic cleavages in vivo yield mature proteins. Envelope glycoproteins are synthesized as an inactive precursor that is N-glycosylated and processed likely by host cell furin or by a furin-like protease in the Golgi to yield the mature SU and TM proteins. The cleavage site between SU and TM requires the minimal sequence [KR]-X-[KR]-R. The CXXC motif is highly conserved across a broad range of retroviral envelope proteins. It is thought to participate in the formation of a labile disulfide bond possibly with the CX6CC motif present in the transmembrane protein. Isomerization of the intersubunit disulfide bond to an SU intrachain disulfide bond is thought to occur upon receptor recognition in order to allow membrane fusion. In terms of processing, the transmembrane protein is palmitoylated.

Its subcellular location is the virion membrane. The protein localises to the host cell membrane. Functionally, the surface protein (SU) attaches the virus to the host cell by binding to its receptor. This interaction triggers the refolding of the transmembrane protein (TM) and is thought to activate its fusogenic potential by unmasking its fusion peptide. Fusion occurs at the host cell plasma membrane. Its function is as follows. The transmembrane protein (TM) acts as a class I viral fusion protein. Under the current model, the protein has at least 3 conformational states: pre-fusion native state, pre-hairpin intermediate state, and post-fusion hairpin state. During viral and target cell membrane fusion, the coiled coil regions (heptad repeats) assume a trimer-of-hairpins structure, positioning the fusion peptide in close proximity to the C-terminal region of the ectodomain. The formation of this structure appears to drive apposition and subsequent fusion of viral and target cell membranes. Membranes fusion leads to delivery of the nucleocapsid into the cytoplasm. The chain is Envelope glycoprotein (env) from Galliformes.